We begin with the raw amino-acid sequence, 617 residues long: LEAF RUST 10 DISEASE-RESISTANCE LOCUS RECEPTOR-LIKE PROTEIN KINASE-like 2.4 (617 aa).

An N-terminal signal peptide occupies residues 1 to 26 (MYYLPSSCLVLFLFFSLFYHLPCASS). The Extracellular portion of the chain corresponds to 27–243 (KQTLGWCESQ…LPTRLSSEAK (217 aa)). N-linked (GlcNAc...) asparagine glycosylation is found at N41, N69, N86, N112, and N184. Residues 244–264 (IATIAGVSLLPFLVLTLVVHI) traverse the membrane as a helical segment. Topologically, residues 265-617 (IRKQKTSNDK…SEENSISSEI (353 aa)) are cytoplasmic. In terms of domain architecture, Protein kinase spans 307 to 594 (NSFAEVVGRG…ALEVPPRPVL (288 aa)). Residues 313 to 321 (VGRGGFGIV) and K335 each bind ATP. Y380 carries the post-translational modification Phosphotyrosine. The active-site Proton acceptor is the D431. Phosphothreonine is present on residues T468 and T471.

Belongs to the protein kinase superfamily. Ser/Thr protein kinase family.

It localises to the membrane. It catalyses the reaction L-seryl-[protein] + ATP = O-phospho-L-seryl-[protein] + ADP + H(+). It carries out the reaction L-threonyl-[protein] + ATP = O-phospho-L-threonyl-[protein] + ADP + H(+). The chain is LEAF RUST 10 DISEASE-RESISTANCE LOCUS RECEPTOR-LIKE PROTEIN KINASE-like 2.4 from Arabidopsis thaliana (Mouse-ear cress).